The following is a 766-amino-acid chain: MKTPWKVLLGLLGAAALVTIITVPVVLLNKGTDDATADSRKTYTLTDYLKNTYRLKLYSLRWISDHEYLYKQENNILVFNAEYGNSSVFLENSTFDEFGHSINDYSISPDGQFILLEYNYVKQWRHSYTASYDIYDLNKRQLITEERIPNNTQWVTWSPVGHKLAYVWNNDIYVKIEPNLPSYRITWTGKEDIIYNGITDWVYEEEVFSAYSALWWSPNGTFLAYAQFNDTEVPLIEYSFYSDESLQYPKTVRVPYPKAGAVNPTVKFFVVNTDSLSSVTNATSIQITAPASMLIGDHYLCDVTWATQERISLQWLRRIQNYSVMDICDYDESSGRWNCLVARQHIEMSTTGWVGRFRPSEPHFTLDGNSFYKIISNEEGYRHICYFQIDKKDCTFITKGTWEVIGIEALTSDYLYYISNEYKGMPGGRNLYKIQLSDYTKVTCLSCELNPERCQYYSVSFSKEAKYYQLRCSGPGLPLYTLHSSVNDKGLRVLEDNSALDKMLQNVQMPSKKLDFIILNETKFWYQMILPPHFDKSKKYPLLLDVYAGPCSQKADTVFRLNWATYLASTENIIVASFDGRGSGYQGDKIMHAINRRLGTFEVEDQIEAARQFSKMGFVDNKRIAIWGWSYGGYVTSMVLGSGSGVFKCGIAVAPVSRWEYYDSVYTERYMGLPTPEDNLDHYRNSTVMSRAENFKQVEYLLIHGTADDNVHFQQSAQISKALVDVGVDFQAMWYTDEDHGIASSTAHQHIYTHMSHFIKQCFSLP.

Residues 1-6 (MKTPWK) lie on the Cytoplasmic side of the membrane. Residues 7-28 (VLLGLLGAAALVTIITVPVVLL) form a helical; Signal-anchor for type II membrane protein membrane-spanning segment. Topologically, residues 29–766 (NKGTDDATAD…HFIKQCFSLP (738 aa)) are extracellular. N-linked (GlcNAc...) asparagine glycosylation is found at asparagine 85, asparagine 92, asparagine 150, asparagine 219, asparagine 229, asparagine 281, and asparagine 321. 4 cysteine pairs are disulfide-bonded: cysteine 328–cysteine 339, cysteine 385–cysteine 394, cysteine 444–cysteine 447, and cysteine 454–cysteine 472. N-linked (GlcNAc...) asparagine glycosylation is present at asparagine 520. Catalysis depends on serine 630, which acts as the Charge relay system. A disulfide bridge links cysteine 649 with cysteine 762. Asparagine 685 is a glycosylation site (N-linked (GlcNAc...) asparagine). Residues aspartate 708 and histidine 740 each act as charge relay system in the active site.

The protein belongs to the peptidase S9B family. DPPIV subfamily. As to quaternary structure, monomer. Homodimer. Heterodimer with Seprase (FAP). Requires homodimerization for optimal dipeptidyl peptidase activity and T-cell costimulation. Found in a membrane raft complex, at least composed of BCL10, CARD11, DPP4 and IKBKB. Associates with collagen. Interacts with PTPRC; the interaction is enhanced in an interleukin-12-dependent manner in activated lymphocytes. Interacts (via extracellular domain) with ADA; does not inhibit its dipeptidyl peptidase activity. Interacts with CAV1 (via the N-terminus); the interaction is direct. Interacts (via cytoplasmic tail) with CARD11 (via PDZ domain); its homodimerization is necessary for interaction with CARD11. Interacts with IGF2R; the interaction is direct. Interacts with GPC3. Interacts with human coronavirus-EMC spike protein and acts as a receptor for this virus. (Microbial infection) Interacts with MERS coronavirus/MERS-CoV spike protein. The soluble form (Dipeptidyl peptidase 4 soluble form also named SDPP) derives from the membrane form (Dipeptidyl peptidase 4 membrane form also named MDPP) by proteolytic processing. In terms of processing, N- and O-Glycosylated. Post-translationally, phosphorylated. Mannose 6-phosphate residues in the carbohydrate moiety are necessary for interaction with IGF2R in activated T-cells. Mannose 6-phosphorylation is induced during T-cell activation. In terms of tissue distribution, expressed specifically in lymphatic vessels but not in blood vessels in the skin, small intestine, esophagus, ovary, breast and prostate glands. Not detected in lymphatic vessels in the lung, kidney, uterus, liver and stomach (at protein level). Expressed in the poorly differentiated crypt cells of the small intestine as well as in the mature villous cells. Expressed at very low levels in the colon.

The protein localises to the secreted. Its subcellular location is the cell membrane. The protein resides in the apical cell membrane. It is found in the cell projection. It localises to the invadopodium membrane. The protein localises to the lamellipodium membrane. Its subcellular location is the cell junction. The protein resides in the membrane raft. It carries out the reaction Release of an N-terminal dipeptide, Xaa-Yaa-|-Zaa-, from a polypeptide, preferentially when Yaa is Pro, provided Zaa is neither Pro nor hydroxyproline.. Inhibited by GPC3 and diprotin A. Cell surface glycoprotein receptor involved in the costimulatory signal essential for T-cell receptor (TCR)-mediated T-cell activation. Acts as a positive regulator of T-cell coactivation, by binding at least ADA, CAV1, IGF2R, and PTPRC. Its binding to CAV1 and CARD11 induces T-cell proliferation and NF-kappa-B activation in a T-cell receptor/CD3-dependent manner. Its interaction with ADA also regulates lymphocyte-epithelial cell adhesion. In association with FAP is involved in the pericellular proteolysis of the extracellular matrix (ECM), the migration and invasion of endothelial cells into the ECM. May be involved in the promotion of lymphatic endothelial cells adhesion, migration and tube formation. When overexpressed, enhanced cell proliferation, a process inhibited by GPC3. Also acts as a serine exopeptidase with a dipeptidyl peptidase activity that regulates various physiological processes by cleaving peptides in the circulation, including many chemokines, mitogenic growth factors, neuropeptides and peptide hormones such as brain natriuretic peptide 32. Removes N-terminal dipeptides sequentially from polypeptides having unsubstituted N-termini provided that the penultimate residue is proline. Functionally, (Microbial infection) Acts as a receptor for human coronavirus MERS-CoV-2. In Homo sapiens (Human), this protein is Dipeptidyl peptidase 4.